A 1392-amino-acid chain; its full sequence is DNA-directed RNA polymerase subunit beta'' (1392 aa).

4 residues coordinate Zn(2+): Cys224, Cys295, Cys302, and Cys305.

This sequence belongs to the RNA polymerase beta' chain family. RpoC2 subfamily. As to quaternary structure, in plastids the minimal PEP RNA polymerase catalytic core is composed of four subunits: alpha, beta, beta', and beta''. When a (nuclear-encoded) sigma factor is associated with the core the holoenzyme is formed, which can initiate transcription. The cofactor is Zn(2+).

The protein resides in the plastid. The protein localises to the chloroplast. It catalyses the reaction RNA(n) + a ribonucleoside 5'-triphosphate = RNA(n+1) + diphosphate. DNA-dependent RNA polymerase catalyzes the transcription of DNA into RNA using the four ribonucleoside triphosphates as substrates. The chain is DNA-directed RNA polymerase subunit beta'' from Nicotiana tomentosiformis (Tobacco).